Reading from the N-terminus, the 363-residue chain is 3-isopropylmalate dehydrogenase (363 aa).

78–89 (GPKWGTGAVRPE) serves as a coordination point for NAD(+). Substrate contacts are provided by arginine 96, arginine 106, arginine 135, and aspartate 224. Positions 224, 249, and 253 each coordinate Mg(2+). NAD(+) is bound at residue 288–299 (GSAPDLPANKVN).

Belongs to the isocitrate and isopropylmalate dehydrogenases family. In terms of assembly, homodimer. Mg(2+) serves as cofactor. It depends on Mn(2+) as a cofactor.

It localises to the cytoplasm. It carries out the reaction (2R,3S)-3-isopropylmalate + NAD(+) = 4-methyl-2-oxopentanoate + CO2 + NADH. It participates in amino-acid biosynthesis; L-leucine biosynthesis; L-leucine from 3-methyl-2-oxobutanoate: step 3/4. In terms of biological role, catalyzes the oxidation of 3-carboxy-2-hydroxy-4-methylpentanoate (3-isopropylmalate) to 3-carboxy-4-methyl-2-oxopentanoate. The product decarboxylates to 4-methyl-2 oxopentanoate. In Cyberlindnera jadinii (Torula yeast), this protein is 3-isopropylmalate dehydrogenase (LEU2).